Here is a 611-residue protein sequence, read N- to C-terminus: Protein halfway (611 aa).

Positions 1–22 (MLAYTHGTWLLLLLLLVAGACA) are cleaved as a signal peptide. 3 disordered regions span residues 31–64 (DPAA…LKED), 90–132 (SLAE…AAPE), and 154–185 (GRAE…CQCR). Over residues 43 to 59 (AHAHPQARHHHHAHPHA) the composition is skewed to basic residues. The span at 90–101 (SLAETQSMSDPG) shows a compositional bias: polar residues. The segment covering 102 to 123 (SVTDTTSTSTSHSTSTTSTTSP) has biased composition (low complexity). Positions 159 to 183 (SEGQGSTVAQSEAQNRGGQGNSQCQ) are enriched in polar residues. N-linked (GlcNAc...) asparagine glycans are attached at residues N221, N246, N264, and N269. LRR repeat units lie at residues 236-257 (SLQS…FPRL), 259-280 (ALKC…AVKD), 283-304 (HLEF…NQNK), and 313-334 (NMRM…NFLN). In terms of domain architecture, LRRNT spans 361 to 416 (ENRKRCVTNCPVIPNYGSCNCTLENIMIIQDNQSKPQCHVDCSNLGLVELPQRLPD). LRR repeat units follow at residues 417 to 438 (NTFM…FHTN), 443 to 464 (NINR…EGTK), and 468 to 489 (TFQR…FLNN). Positions 505 to 554 (NKLQCDCNSAKTLQNWLKERSSDIPDYMEIRCRNMPQRVIELQEAKLCQS) constitute an LRRCT domain.

Its function is as follows. Has a role in the ecdysone induced cascade; probably indirect control of 'late' ecdysone genes. The protein is Protein halfway of Drosophila melanogaster (Fruit fly).